Consider the following 138-residue polypeptide: MTAIRLREFIDRRPAIPPSIFIVHQGKDLRGYYTGQLARVHYDYSVKRSPRPLIDLDIPFKKKSQYQPQLDQQTLIQYICFRRRSKPAEPWYKETSYQRDYSLPFYKTDWDRKLATVSSNPRPLNSLPEHYCCEGRWL.

In Bos taurus (Bovine), this protein is Protein SPMIP3 (SPMIP3).